Here is a 272-residue protein sequence, read N- to C-terminus: Dermonecrotic toxin LspaSicTox-alphaII1 (272 aa).

The active site involves His-5. Glu-25 and Asp-27 together coordinate Mg(2+). The active-site Nucleophile is the His-41. Disulfide bonds link Cys-45-Cys-51 and Cys-47-Cys-190. Asp-85 is a Mg(2+) binding site.

The protein belongs to the arthropod phospholipase D family. Class II subfamily. Mg(2+) is required as a cofactor. In terms of tissue distribution, expressed by the venom gland.

Its subcellular location is the secreted. The catalysed reaction is an N-(acyl)-sphingosylphosphocholine = an N-(acyl)-sphingosyl-1,3-cyclic phosphate + choline. The enzyme catalyses an N-(acyl)-sphingosylphosphoethanolamine = an N-(acyl)-sphingosyl-1,3-cyclic phosphate + ethanolamine. It catalyses the reaction a 1-acyl-sn-glycero-3-phosphocholine = a 1-acyl-sn-glycero-2,3-cyclic phosphate + choline. It carries out the reaction a 1-acyl-sn-glycero-3-phosphoethanolamine = a 1-acyl-sn-glycero-2,3-cyclic phosphate + ethanolamine. In terms of biological role, dermonecrotic toxins cleave the phosphodiester linkage between the phosphate and headgroup of certain phospholipids (sphingolipid and lysolipid substrates), forming an alcohol (often choline) and a cyclic phosphate. This toxin acts on sphingomyelin (SM). It may also act on ceramide phosphoethanolamine (CPE), lysophosphatidylcholine (LPC) and lysophosphatidylethanolamine (LPE), but not on lysophosphatidylserine (LPS), and lysophosphatidylglycerol (LPG). It acts by transphosphatidylation, releasing exclusively cyclic phosphate products as second products. Induces dermonecrosis, hemolysis, increased vascular permeability, edema, inflammatory response, and platelet aggregation. This Loxosceles spadicea (Recluse spider) protein is Dermonecrotic toxin LspaSicTox-alphaII1.